The chain runs to 408 residues: NFATC2-interacting protein (408 aa).

Residues 1–113 (MAEPVGKRGR…LDPGEAPLVP (113 aa)) are disordered. Residues 24-40 (QRSPSRGTLDVVSVDLV) show a composition bias toward low complexity. Residues Ser-41, Ser-43, Ser-73, Ser-77, Ser-79, Ser-81, and Ser-116 each carry the phosphoserine modification. Glycyl lysine isopeptide (Lys-Gly) (interchain with G-Cter in SUMO2) cross-links involve residues Lys-118 and Lys-120. The interval 141–205 (EEEVELADSS…TKSRKHTRAL (65 aa)) is disordered. The segment covering 169 to 181 (RTKDKEEKKKTEI) has biased composition (basic and acidic residues). Ser-187, Ser-190, and Ser-193 each carry phosphoserine. Over residues 196–205 (TKSRKHTRAL) the composition is skewed to basic residues. A coiled-coil region spans residues 197–220 (KSRKHTRALKKLSEVNKRLQDLRS). Ser-209 and Ser-303 each carry phosphoserine. A phosphothreonine mark is found at Thr-305 and Thr-307. Residues 337 to 408 (LQLRVQGKEK…ESGDLIEVWG (72 aa)) enclose the Ubiquitin-like domain. Phosphoserine is present on residues Ser-358 and Ser-379.

Interacts with NFATC2, TRAF1, TRAF2 and PRMT1. Interacts with UBE2I/UBC9. Methylation at the N-terminus by PRMT1 modulates interaction with the NFAT complex and results in augmented cytokine production.

The protein localises to the nucleus. Its subcellular location is the cytoplasm. In terms of biological role, in T-helper 2 (Th2) cells, regulates the magnitude of NFAT-driven transcription of a specific subset of cytokine genes, including IL3, IL4, IL5 and IL13, but not IL2. Recruits PRMT1 to the IL4 promoter; this leads to enhancement of histone H4 'Arg-3'-methylation and facilitates subsequent histone acetylation at the IL4 locus, thus promotes robust cytokine expression. Down-regulates formation of poly-SUMO chains by UBE2I/UBC9. The polypeptide is NFATC2-interacting protein (NFATC2IP) (Macaca fascicularis (Crab-eating macaque)).